We begin with the raw amino-acid sequence, 214 residues long: Large ribosomal subunit protein uL2my, C-terminal part (214 aa).

Residues 1-30 (MSGLVALCRARASASSSLFNSVIRPAFRNF) constitute a mitochondrion transit peptide. Residues 157–214 (VAMNPCDHPHGGGEGKSKSSGSRGRTSVSPWGKPCKGGYKSASVKKKKKRLAEAAAKM) form a disordered region. Positions 163–173 (DHPHGGGEGKS) are enriched in basic and acidic residues. Over residues 174-185 (KSSGSRGRTSVS) the composition is skewed to low complexity.

Belongs to the universal ribosomal protein uL2 family. In terms of assembly, component of the mitochondrial ribosome large subunit.

It is found in the mitochondrion. This chain is Large ribosomal subunit protein uL2my, C-terminal part, found in Arabidopsis thaliana (Mouse-ear cress).